Reading from the N-terminus, the 50-residue chain is Large ribosomal subunit protein bL33 (50 aa).

It belongs to the bacterial ribosomal protein bL33 family.

The chain is Large ribosomal subunit protein bL33 from Sulfurimonas denitrificans (strain ATCC 33889 / DSM 1251) (Thiomicrospira denitrificans (strain ATCC 33889 / DSM 1251)).